The primary structure comprises 610 residues: Dapper homolog 3 (610 aa).

S6 carries the phosphoserine modification. Disordered regions lie at residues 50–76 (PGMG…RRAA), 102–179 (LESG…SVGA), and 200–579 (TCSS…PAGP). The span at 56–69 (EAEDEEDAEEDEDA) shows a compositional bias: acidic residues. Residues 63-87 (AEEDEDAAAARRAAAALEEQLEALP) adopt a coiled-coil conformation. Positions 120–138 (DPSSTGGPDSPPSTFCGDS) are enriched in low complexity. Phosphoserine occurs at positions 165 and 237. R255 is subject to Omega-N-methylarginine. The segment covering 317–331 (PPEPAPPAAASPPSS) has biased composition (pro residues). Positions 344–356 (PGAPAASRGLPGR) are enriched in low complexity. Phosphoserine occurs at positions 409 and 456. Residues 475 to 485 (PRGPAPSPSAP) show a composition bias toward pro residues. The span at 524-545 (ESESSASEGESPAFSSASSDSD) shows a compositional bias: low complexity. Positions 566-576 (GPGGAAGGGTP) are enriched in gly residues. The PDZ-binding signature appears at 607–610 (MTTV).

The protein belongs to the dapper family. In terms of assembly, can form homodimers and heterodimers with DACT1 or DACT3. Interacts with CSNK1D, PKA catalytic subunit, PKC-type kinase, DVL1, DVL2, DVL3, VANGL1, VANGL2 and CTNND1. Expressed in brain and uterus.

Its function is as follows. May be involved in regulation of intracellular signaling pathways during development. Specifically thought to play a role in canonical and/or non-canonical Wnt signaling pathways through interaction with DSH (Dishevelled) family proteins. The protein is Dapper homolog 3 (Dact3) of Mus musculus (Mouse).